Here is a 546-residue protein sequence, read N- to C-terminus: Chaperonin GroEL (546 aa).

ATP-binding positions include 29–32 (TMGP), Lys50, 86–90 (DGTTT), Gly414, and Asp492.

It belongs to the chaperonin (HSP60) family. In terms of assembly, forms a cylinder of 14 subunits composed of two heptameric rings stacked back-to-back. Interacts with the co-chaperonin GroES.

The protein localises to the cytoplasm. It carries out the reaction ATP + H2O + a folded polypeptide = ADP + phosphate + an unfolded polypeptide.. Functionally, together with its co-chaperonin GroES, plays an essential role in assisting protein folding. The GroEL-GroES system forms a nano-cage that allows encapsulation of the non-native substrate proteins and provides a physical environment optimized to promote and accelerate protein folding. This chain is Chaperonin GroEL, found in Helicobacter pylori (strain HPAG1).